The following is a 660-amino-acid chain: Bifunctional polymyxin resistance protein ArnA (660 aa).

Positions 1-304 (MKTVVFAYHD…TLGLVQGSRL (304 aa)) are formyltransferase ArnAFT. (6R)-10-formyltetrahydrofolate is bound at residue 86–88 (HLI). The active-site Proton donor; for formyltransferase activity is His104. Residues Arg114 and 136 to 140 (VKRAD) each bind (6R)-10-formyltetrahydrofolate. The interval 314 to 660 (RRTRVLILGV…RTVDLTDKPS (347 aa)) is dehydrogenase ArnADH. NAD(+) is bound by residues Asp347 and 368–369 (DI). Residues Ala393, Tyr398, and 432–433 (TS) contribute to the UDP-alpha-D-glucuronate site. Catalysis depends on Glu434, which acts as the Proton acceptor; for decarboxylase activity. Residues Arg460, Asn492, 526–535 (KLIDGGKQKR), and Tyr613 contribute to the UDP-alpha-D-glucuronate site. Arg619 (proton donor; for decarboxylase activity) is an active-site residue.

In the N-terminal section; belongs to the Fmt family. UDP-L-Ara4N formyltransferase subfamily. This sequence in the C-terminal section; belongs to the NAD(P)-dependent epimerase/dehydratase family. UDP-glucuronic acid decarboxylase subfamily. Homohexamer, formed by a dimer of trimers.

The catalysed reaction is UDP-alpha-D-glucuronate + NAD(+) = UDP-beta-L-threo-pentopyranos-4-ulose + CO2 + NADH. The enzyme catalyses UDP-4-amino-4-deoxy-beta-L-arabinose + (6R)-10-formyltetrahydrofolate = UDP-4-deoxy-4-formamido-beta-L-arabinose + (6S)-5,6,7,8-tetrahydrofolate + H(+). Its pathway is nucleotide-sugar biosynthesis; UDP-4-deoxy-4-formamido-beta-L-arabinose biosynthesis; UDP-4-deoxy-4-formamido-beta-L-arabinose from UDP-alpha-D-glucuronate: step 1/3. It participates in nucleotide-sugar biosynthesis; UDP-4-deoxy-4-formamido-beta-L-arabinose biosynthesis; UDP-4-deoxy-4-formamido-beta-L-arabinose from UDP-alpha-D-glucuronate: step 3/3. The protein operates within bacterial outer membrane biogenesis; lipopolysaccharide biosynthesis. Functionally, bifunctional enzyme that catalyzes the oxidative decarboxylation of UDP-glucuronic acid (UDP-GlcUA) to UDP-4-keto-arabinose (UDP-Ara4O) and the addition of a formyl group to UDP-4-amino-4-deoxy-L-arabinose (UDP-L-Ara4N) to form UDP-L-4-formamido-arabinose (UDP-L-Ara4FN). The modified arabinose is attached to lipid A and is required for resistance to polymyxin and cationic antimicrobial peptides. The chain is Bifunctional polymyxin resistance protein ArnA from Escherichia coli (strain K12 / MC4100 / BW2952).